Consider the following 201-residue polypeptide: Holliday junction branch migration complex subunit RuvA (201 aa).

The segment at 1–64 (MIGRLRGELV…EDAHVLYGFA (64 aa)) is domain I. Residues 65 to 143 (SESERALFRS…SLPAAVTLTG (79 aa)) are domain II. The flexible linker stretch occupies residues 144-153 (GKPAAAAARA). Positions 153-201 (APDPVSDAVSALVSLGYKPQEASRLISAVEGEAERSEDLIRLALKATLK) are domain III.

The protein belongs to the RuvA family. As to quaternary structure, homotetramer. Forms an RuvA(8)-RuvB(12)-Holliday junction (HJ) complex. HJ DNA is sandwiched between 2 RuvA tetramers; dsDNA enters through RuvA and exits via RuvB. An RuvB hexamer assembles on each DNA strand where it exits the tetramer. Each RuvB hexamer is contacted by two RuvA subunits (via domain III) on 2 adjacent RuvB subunits; this complex drives branch migration. In the full resolvosome a probable DNA-RuvA(4)-RuvB(12)-RuvC(2) complex forms which resolves the HJ.

The protein localises to the cytoplasm. The RuvA-RuvB-RuvC complex processes Holliday junction (HJ) DNA during genetic recombination and DNA repair, while the RuvA-RuvB complex plays an important role in the rescue of blocked DNA replication forks via replication fork reversal (RFR). RuvA specifically binds to HJ cruciform DNA, conferring on it an open structure. The RuvB hexamer acts as an ATP-dependent pump, pulling dsDNA into and through the RuvAB complex. HJ branch migration allows RuvC to scan DNA until it finds its consensus sequence, where it cleaves and resolves the cruciform DNA. In Thioalkalivibrio sulfidiphilus (strain HL-EbGR7), this protein is Holliday junction branch migration complex subunit RuvA.